Reading from the N-terminus, the 206-residue chain is Large ribosomal subunit protein uL4 (206 aa).

It belongs to the universal ribosomal protein uL4 family. As to quaternary structure, part of the 50S ribosomal subunit.

One of the primary rRNA binding proteins, this protein initially binds near the 5'-end of the 23S rRNA. It is important during the early stages of 50S assembly. It makes multiple contacts with different domains of the 23S rRNA in the assembled 50S subunit and ribosome. Its function is as follows. Forms part of the polypeptide exit tunnel. The sequence is that of Large ribosomal subunit protein uL4 from Rhodopseudomonas palustris (strain BisB5).